A 251-amino-acid chain; its full sequence is 2,3-bisphosphoglycerate-dependent phosphoglycerate mutase (251 aa).

Substrate is bound by residues 11-18, 24-25, arginine 63, 90-93, lysine 101, 117-118, and 185-186; these read RHGNSDWN, TG, ERHY, RR, and GN. Histidine 12 functions as the Tele-phosphohistidine intermediate in the catalytic mechanism. Residue glutamate 90 is the Proton donor/acceptor of the active site.

Belongs to the phosphoglycerate mutase family. BPG-dependent PGAM subfamily.

It catalyses the reaction (2R)-2-phosphoglycerate = (2R)-3-phosphoglycerate. It participates in carbohydrate degradation; glycolysis; pyruvate from D-glyceraldehyde 3-phosphate: step 3/5. Functionally, catalyzes the interconversion of 2-phosphoglycerate and 3-phosphoglycerate. This is 2,3-bisphosphoglycerate-dependent phosphoglycerate mutase from Clavibacter sepedonicus (Clavibacter michiganensis subsp. sepedonicus).